Reading from the N-terminus, the 155-residue chain is Transcription antitermination protein NusB (155 aa).

This sequence belongs to the NusB family.

Functionally, involved in transcription antitermination. Required for transcription of ribosomal RNA (rRNA) genes. Binds specifically to the boxA antiterminator sequence of the ribosomal RNA (rrn) operons. This Azoarcus sp. (strain BH72) protein is Transcription antitermination protein NusB.